A 253-amino-acid polypeptide reads, in one-letter code: uncharacterized protein (253 aa).

This is an uncharacterized protein from Mycoplasma pneumoniae (strain ATCC 29342 / M129 / Subtype 1) (Mycoplasmoides pneumoniae).